Here is a 377-residue protein sequence, read N- to C-terminus: tRNA-specific 2-thiouridylase MnmA (377 aa).

ATP is bound by residues 8-15 (GMSGGVDS) and methionine 34. The interval 94–96 (NPD) is interaction with target base in tRNA. The active-site Nucleophile is the cysteine 99. The cysteines at positions 99 and 201 are disulfide-linked. Glycine 123 serves as a coordination point for ATP. The interval 151 to 153 (KDQ) is interaction with tRNA. Residue cysteine 201 is the Cysteine persulfide intermediate of the active site. Positions 315–316 (RY) are interaction with tRNA.

Belongs to the MnmA/TRMU family.

Its subcellular location is the cytoplasm. It carries out the reaction S-sulfanyl-L-cysteinyl-[protein] + uridine(34) in tRNA + AH2 + ATP = 2-thiouridine(34) in tRNA + L-cysteinyl-[protein] + A + AMP + diphosphate + H(+). Functionally, catalyzes the 2-thiolation of uridine at the wobble position (U34) of tRNA, leading to the formation of s(2)U34. In Acinetobacter baylyi (strain ATCC 33305 / BD413 / ADP1), this protein is tRNA-specific 2-thiouridylase MnmA.